A 219-amino-acid polypeptide reads, in one-letter code: Chalcone--flavanone isomerase (219 aa).

Residues Thr50, Asn115, and Ser188 each coordinate substrate.

This sequence belongs to the chalcone isomerase family.

It carries out the reaction a chalcone = a flavanone.. It participates in secondary metabolite biosynthesis; flavonoid biosynthesis. Functionally, catalyzes the intramolecular cyclization of bicyclic chalcones into tricyclic (S)-flavanones. Responsible for the isomerization of 4,2',4',6'-tetrahydroxychalcone (also termed chalcone) into naringenin. The chain is Chalcone--flavanone isomerase (CHI) from Clitoria ternatea (Butterfly pea).